Consider the following 150-residue polypeptide: Group IIC secretory phospholipase A2 (150 aa).

An N-terminal signal peptide occupies residues 1-20; sequence MKGIAIFLVFIFYWTTSTLS. 8 cysteine pairs are disulfide-bonded: Cys-46–Cys-143, Cys-48–Cys-64, Cys-63–Cys-121, Cys-69–Cys-150, Cys-70–Cys-114, Cys-79–Cys-107, Cys-97–Cys-112, and Cys-99–Cys-105. Ca(2+) is bound by residues Tyr-47, Gly-49, and Gly-51. The active site involves His-67. A Ca(2+)-binding site is contributed by Asp-68. The N-linked (GlcNAc...) asparagine glycan is linked to Asn-92. Residue Asp-115 is part of the active site.

The protein belongs to the phospholipase A2 family. Ca(2+) serves as cofactor. In terms of tissue distribution, testis specific.

It is found in the secreted. It carries out the reaction a 1,2-diacyl-sn-glycero-3-phosphocholine + H2O = a 1-acyl-sn-glycero-3-phosphocholine + a fatty acid + H(+). Its function is as follows. PA2 catalyzes the calcium-dependent hydrolysis of the 2-acyl groups in 3-sn-phosphoglycerides. Testis PA2 may be important in the production of prostaglandins, by the release of arachidonic acid, which in turn are necessary for the contractions of the seminiferous tubules and the testicular capsule; they also seem to decrease sperm transit time through the male reproductive tract. In Mus musculus (Mouse), this protein is Group IIC secretory phospholipase A2 (Pla2g2c).